A 361-amino-acid chain; its full sequence is Beta-hexosaminidase (361 aa).

Residues Asp-69, Arg-77, Arg-144, and 174 to 175 (KH) contribute to the substrate site. Residue His-187 is the Proton donor/acceptor of the active site. Catalysis depends on Asp-258, which acts as the Nucleophile.

This sequence belongs to the glycosyl hydrolase 3 family. NagZ subfamily.

The protein resides in the cytoplasm. The enzyme catalyses Hydrolysis of terminal non-reducing N-acetyl-D-hexosamine residues in N-acetyl-beta-D-hexosaminides.. It functions in the pathway cell wall biogenesis; peptidoglycan recycling. Plays a role in peptidoglycan recycling by cleaving the terminal beta-1,4-linked N-acetylglucosamine (GlcNAc) from peptide-linked peptidoglycan fragments, giving rise to free GlcNAc, anhydro-N-acetylmuramic acid and anhydro-N-acetylmuramic acid-linked peptides. This is Beta-hexosaminidase from Neisseria meningitidis serogroup B (strain ATCC BAA-335 / MC58).